The chain runs to 448 residues: MTFKVIIVGGGPVGLYMAHAFERANIDYVILEQQDTVLNISGQLLFTWPQTVRLFDQIGLLADLENVALGIHHKKRLFGDNGQVTTTSNFWDAMQDNHGYPFLPLLRSELVKILYNHLKGRESNIRVNSRVTDIRPHATGVHVHLADGSLIQGSIVVGADGVHSRTRQIMDSLVAQHALNPARLANKPMVSTFYGIFGRASNVDLGIEPEVFFESRGGGGEGGAVVQCLATKDIVQFVTLKPLPGGPTSERSPRYSDEEMDAYAASLADVAVCPGVKFGDVWAKVQRKSTRMLNQEEGFLDNWFFDRIVLVGDAVHKSTSVNGLGMTCGLHSGAVLANELHSLLSRQREKEEEPSTEELEGAFGRYQEDRKTEVKPIWNGGHAMIREVVKKGWVSWFWDRFVLPWCDMETFAKGLLVSVLLIRQGQILRFVPFEGRGGRVPWARKVVV.

Positions 32 and 107 each coordinate FAD. Gln-227 is a catalytic residue. Asp-313 contacts FAD.

The protein belongs to the paxM FAD-dependent monooxygenase family. FAD is required as a cofactor.

Its function is as follows. Highly reducing polyketide synthase; part of the gene cluster that mediates the biosynthesis of sordarial, a salicylic aldehyde structurally related to the phytotoxin pyriculol. The most interesting aspect of this pathway is formation of an aromatic product from the highly reducing polyketide synthase srdA. SrdA synthesizes a reduced polyketide chain from one molecule of acetyl-CoA and five molecules of malonyl-CoA. The polyketide chain is then reductively released as an aldehyde. The oxidoreductases srdC, srdD and srdE then oxidize one of the hydroxy groups to facilitate the intramolecular aldol condensation, followed by dehydration to yield a salicylic aldehyde. This aldehyde can undergo facile reduction by endogenous reductases to yield the alcohol 1-hydroxy-2-hydroxymethyl-3-pent-1,3-dienylbenzene. The flavin-dependent srdI counteract against the propensity of the aldehydes to be reduced under physiological conditions and is responsible for reoxidizing 1-hydroxy-2-hydroxymethyl-3-pent-1,3-dienylbenzene back to the salicylic aldehyde. This salicylic aldehyde is then selectively epoxidized by the cupin-domain-containing oxidoreductase srdB to yield the epoxide, which can be hydrolyzed stereoselectively by the hydrolase srdG to give the final product sordarial. This Neurospora crassa (strain ATCC 24698 / 74-OR23-1A / CBS 708.71 / DSM 1257 / FGSC 987) protein is FAD-dependent monooxygenase srdH.